A 263-amino-acid polypeptide reads, in one-letter code: Non-functional protein STAY-GREEN, chloroplastic (263 aa).

A chloroplast-targeting transit peptide spans 1–54; sequence MDTLTSAPLLTSKFKPSFSPQQKPCFPHRRRFENGKKKQSIVPVARLFGPAIFE.

It belongs to the staygreen family.

Its subcellular location is the plastid. It localises to the chloroplast. In terms of biological role, non-functional protein probably interfering with the disassembling mechanism of the intact light-harvesting complex of photosystem II (LHCII) in the thylakoid membranes. Responsible for a stay-green phenotype. The sequence is that of Non-functional protein STAY-GREEN, chloroplastic (SGR) from Pisum sativum (Garden pea).